A 152-amino-acid chain; its full sequence is Small ribosomal subunit protein uS13 (152 aa).

This sequence belongs to the universal ribosomal protein uS13 family. In terms of assembly, part of the 30S ribosomal subunit. Forms a loose heterodimer with protein S19. Forms two bridges to the 50S subunit in the 70S ribosome.

Located at the top of the head of the 30S subunit, it contacts several helices of the 16S rRNA. In the 70S ribosome it contacts the 23S rRNA (bridge B1a) and protein L5 of the 50S subunit (bridge B1b), connecting the 2 subunits; these bridges are implicated in subunit movement. This is Small ribosomal subunit protein uS13 from Pyrobaculum aerophilum (strain ATCC 51768 / DSM 7523 / JCM 9630 / CIP 104966 / NBRC 100827 / IM2).